We begin with the raw amino-acid sequence, 130 residues long: Large ribosomal subunit protein bL21 (130 aa).

Positions 103–130 (AGGKTSKAEPRKTRKAEPAAESAPAAAE) are disordered. Residues 108–120 (SKAEPRKTRKAEP) show a composition bias toward basic and acidic residues. Residues 121–130 (AAESAPAAAE) are compositionally biased toward low complexity.

This sequence belongs to the bacterial ribosomal protein bL21 family. In terms of assembly, part of the 50S ribosomal subunit. Contacts protein L20.

This protein binds to 23S rRNA in the presence of protein L20. The sequence is that of Large ribosomal subunit protein bL21 from Methylorubrum extorquens (strain CM4 / NCIMB 13688) (Methylobacterium extorquens).